A 42-amino-acid chain; its full sequence is Conodipine-M beta chain (42 aa).

As to quaternary structure, heterodimer of an alpha and a beta chains; probably disulfide-linked. As to expression, expressed by the venom duct.

The protein localises to the secreted. Its function is as follows. Heterodimer: conodipine-M catalyzes the calcium-dependent hydrolysis of the 2-acyl groups in 3-sn-phosphoglycerides. This activity may be supported by the alpha chain. Conodipine-M inhibits the binding of isradipine (a ligand specific for L-type calcium channel) to L-type calcium channels. The protein is Conodipine-M beta chain of Conus magus (Magical cone).